Here is a 257-residue protein sequence, read N- to C-terminus: MLLTLASGALFFPGLFALSIWALHRLRPGWTEDDCLTVGTRLVSSVQAVLATWAGLTVIISCKNVVSDRHWLATEYVWFLIPYMIYDFYAMYCCERCRTKSQKLTRTTIIRNFLIENRLMVTHHTVILLFLVPISQKLRGDLGDFFVGCIFTAELSTPFVSLARIMIQLKQQHTLLYKVNGILTVTTFLFCRILLFPFMYWSYGQQKGLSLLQVPFNIPLHCNMANAVLISPQLYWFSLLCKKAARLFDTAKAKKDG.

7 consecutive transmembrane segments (helical) span residues 1 to 21 (MLLT…LSIW), 42 to 62 (LVSS…IISC), 71 to 91 (WLAT…FYAM), 114 to 134 (LIEN…LVPI), 142 to 162 (LGDF…FVSL), 181 to 201 (GILT…FMYW), and 220 to 240 (LHCN…FSLL). One can recognise a TLC domain in the interval 33–249 (DDCLTVGTRL…LCKKAARLFD (217 aa)).

As to quaternary structure, interacts with GGT7 isoform 3 and SLC3A2.

It is found in the cell membrane. The protein is TLC domain-containing protein 3A (Tlcd3a) of Mus musculus (Mouse).